The sequence spans 673 residues: MINNWLAVGLLVVSGILAFNWKRKHPYGQTVEIGEKPENGGRIRRNSACADHLISFLEDDEIYTLYDSLVKSCKKYGERKCFGERKKDSNGNLGKFEWISYNTYLERCEYIQQGLCELGLKPKSKVGIFSKNRLEWLIVHSASFIQSYCVVSFYETLGVESLSYVTEHAEIGLAFCSAETLQKTLDIAKGVKVLKTIICFDSIDKEHYNIAKELGVTLYTYDEIMKKGKEANGKHKHTPPTPDTLSTIMYTSGTTGPPKGVMITHKNLTSVVCAVSDFIKVYDTDVHYSYLPYAHVLERVVILAAFHFGAAIGIFSGDISNILVEVKLLSPTLFIGVPRVFERIKTNVFKEISKKPALLRTLFNGAYNLKYLSIQHGFKLPIIEKVLDLVFFSKIKQALGGKVRVILSGSAPLSFDTEVFLRVVMCCCVLQGYGASEGCGGDACKRLDDESVGTIGPPFASNEIKLVDVPELGYDSNGEVQTGEVCLRGPSISSGYYKDEEKTREEFKDGWFHTGDIGRWNRDGSLSIVDRKKNIFKLSQGEYVAVEKIETIVVKSEYVEQVCIYGDSQKSCVIAIIHPHPESCSEWAGSKKTDKDIKEICKNQDFIKVVLDDIIKNCKKSGLHGFEIPKAIHLTPEAFSDQNNLLTPSFKLKRHEIKKYFEDEIKKLYSKLD.

The first 18 residues, 1-18 (MINNWLAVGLLVVSGILA), serve as a signal peptide directing secretion. The N-linked (GlcNAc...) asparagine glycan is linked to N267.

This sequence belongs to the ATP-dependent AMP-binding enzyme family.

The protein localises to the endoplasmic reticulum. It catalyses the reaction a long-chain fatty acid + ATP + CoA = a long-chain fatty acyl-CoA + AMP + diphosphate. Functionally, long chain fatty acid acyl-CoA synthetases catalyze the formation of a thiester bond between a free fatty acid and coenzyme A during fatty acid metabolic process. The sequence is that of Fatty acyl-CoA synthetase B (fcsB) from Dictyostelium discoideum (Social amoeba).